A 158-amino-acid chain; its full sequence is Transcription elongation factor GreA (158 aa).

The stretch at 4–75 forms a coiled coil; sequence EKTYPMTQEG…TQLENMIRNA (72 aa).

Belongs to the GreA/GreB family.

Its function is as follows. Necessary for efficient RNA polymerase transcription elongation past template-encoded arresting sites. The arresting sites in DNA have the property of trapping a certain fraction of elongating RNA polymerases that pass through, resulting in locked ternary complexes. Cleavage of the nascent transcript by cleavage factors such as GreA or GreB allows the resumption of elongation from the new 3'terminus. GreA releases sequences of 2 to 3 nucleotides. The polypeptide is Transcription elongation factor GreA (Bacillus anthracis (strain A0248)).